A 615-amino-acid chain; its full sequence is MAQASGMDPLVDIEDERPKWDNKLQYLLSCIGFAVGLGNIWRFPYLCHTHGGGAFLIPYFIALVFEGIPLFYIELAIGQRLRRGSIGVWKTISPYLGGVGLGCFSVSFLVSLYYNTILLWVLWFFLNSFQHPLPWSTCPLDLNRTGFVQECQSSGTVSYFWYRQTLNITSDISNTGTIQWKLFLCLVACWTTVYLCVIRGIESTGKVIYFTALFPYLVLTIFLIRGLTLPGATEGLTYLFTPNMKILQNSRVWLDAATQIFFSLSLAFGGHIAFASYNQPRNNCEKDAVTIALVNSMTSLYASITIFSIMGFKASNDYGRCLDRNILSLINEFDFPELSISRDEYPSVLMYLNATQPERVARLPLKTCHLEDFLDKSASGPGLAFIVFTEAVLHMPGASVWSVLFFGMLFTLGLSSMFGNMEGVITPLFDMGILPKGVPKETMTGVVCFICFLSAICFTLQSGSYWLEIFDSFAASLNLIIFAFMEVVGVIHVYGIKRFCDDIEWMTGRRPSLYWQVTWRVVSPMLLFGIFLSYIVLLAQSSPSYKAWNPQYEHFPSREEKLYPGWVQVTCVLLSFLPSLWVPGIALAQLLFQYRQRWKNTHLESALKPQESRGC.

The Cytoplasmic portion of the chain corresponds to 1 to 26 (MAQASGMDPLVDIEDERPKWDNKLQY). The helical transmembrane segment at 27-47 (LLSCIGFAVGLGNIWRFPYLC) threads the bilayer. Residues 48–52 (HTHGG) lie on the Extracellular side of the membrane. A helical transmembrane segment spans residues 53–73 (GAFLIPYFIALVFEGIPLFYI). Residues 74-105 (ELAIGQRLRRGSIGVWKTISPYLGGVGLGCFS) lie on the Cytoplasmic side of the membrane. The helical transmembrane segment at 106 to 126 (VSFLVSLYYNTILLWVLWFFL) threads the bilayer. Residues 127 to 177 (NSFQHPLPWSTCPLDLNRTGFVQECQSSGTVSYFWYRQTLNITSDISNTGT) are Extracellular-facing. Residues Asn143 and Asn167 are each glycosylated (N-linked (GlcNAc...) asparagine). Residues 178–198 (IQWKLFLCLVACWTTVYLCVI) traverse the membrane as a helical segment. Residues 199–206 (RGIESTGK) are Cytoplasmic-facing. The chain crosses the membrane as a helical span at residues 207–227 (VIYFTALFPYLVLTIFLIRGL). At 228–255 (TLPGATEGLTYLFTPNMKILQNSRVWLD) the chain is on the extracellular side. A helical transmembrane segment spans residues 256–276 (AATQIFFSLSLAFGGHIAFAS). Residues 277–290 (YNQPRNNCEKDAVT) lie on the Cytoplasmic side of the membrane. Residues 291-311 (IALVNSMTSLYASITIFSIMG) traverse the membrane as a helical segment. The Extracellular portion of the chain corresponds to 312–397 (FKASNDYGRC…FTEAVLHMPG (86 aa)). N-linked (GlcNAc...) asparagine glycosylation occurs at Asn353. A helical membrane pass occupies residues 398-418 (ASVWSVLFFGMLFTLGLSSMF). Residues 419–442 (GNMEGVITPLFDMGILPKGVPKET) are Cytoplasmic-facing. Residues 443 to 463 (MTGVVCFICFLSAICFTLQSG) form a helical membrane-spanning segment. Over 464–472 (SYWLEIFDS) the chain is Extracellular. A helical transmembrane segment spans residues 473 to 493 (FAASLNLIIFAFMEVVGVIHV). Residues 494-520 (YGIKRFCDDIEWMTGRRPSLYWQVTWR) are Cytoplasmic-facing. Residues 521 to 541 (VVSPMLLFGIFLSYIVLLAQS) traverse the membrane as a helical segment. Residues 542–571 (SPSYKAWNPQYEHFPSREEKLYPGWVQVTC) lie on the Extracellular side of the membrane. Residues 572–592 (VLLSFLPSLWVPGIALAQLLF) traverse the membrane as a helical segment. Topologically, residues 593–615 (QYRQRWKNTHLESALKPQESRGC) are cytoplasmic.

Belongs to the sodium:neurotransmitter symporter (SNF) (TC 2.A.22) family. SLC6A18 subfamily. Interacts with CLTRN; this interaction regulates the trafficking of SLC6A18 to the cell membrane and its activity. In terms of tissue distribution, kidney-specific expression.

The protein localises to the apical cell membrane. Its subcellular location is the cell membrane. It catalyses the reaction L-alanine(out) + chloride(out) + 2 Na(+)(out) = L-alanine(in) + chloride(in) + 2 Na(+)(in). The catalysed reaction is glycine(out) + chloride(out) + 2 Na(+)(out) = glycine(in) + chloride(in) + 2 Na(+)(in). It carries out the reaction L-methionine(out) + chloride(out) + 2 Na(+)(out) = L-methionine(in) + chloride(in) + 2 Na(+)(in). The enzyme catalyses L-valine(out) + chloride(out) + 2 Na(+)(out) = L-valine(in) + chloride(in) + 2 Na(+)(in). It catalyses the reaction L-isoleucine(out) + chloride(out) + 2 Na(+)(out) = L-isoleucine(in) + chloride(in) + 2 Na(+)(in). The catalysed reaction is L-serine(out) + chloride(out) + 2 Na(+)(out) = L-serine(in) + chloride(in) + 2 Na(+)(in). It carries out the reaction L-leucine(out) + chloride(out) + 2 Na(+)(out) = L-leucine(in) + chloride(in) + 2 Na(+)(in). Functionally, symporter that transports one amino acid molecule together with two sodium and one chloride ions in kidneys and plays a role in the neutral amino acids reabsorption. Preferentially transports neutral amino acids such as L-glycine and L-alanine but also other neutral amino acids. Required CLTRN for cell surface expression and for its amino acid transporter activity. The transport mechanism is pH-independent. The chain is Sodium-dependent neutral amino acid transporter B(0)AT3 from Rattus norvegicus (Rat).